Consider the following 696-residue polypeptide: Elongation factor G (696 aa).

The 279-residue stretch at 8 to 286 (EDVRNIGIAA…AVVAYLPAPT (279 aa)) folds into the tr-type G domain. GTP is bound by residues 17 to 24 (AHIDAGKT), 81 to 85 (DTPGH), and 135 to 138 (NKMD).

The protein belongs to the TRAFAC class translation factor GTPase superfamily. Classic translation factor GTPase family. EF-G/EF-2 subfamily.

Its subcellular location is the cytoplasm. In terms of biological role, catalyzes the GTP-dependent ribosomal translocation step during translation elongation. During this step, the ribosome changes from the pre-translocational (PRE) to the post-translocational (POST) state as the newly formed A-site-bound peptidyl-tRNA and P-site-bound deacylated tRNA move to the P and E sites, respectively. Catalyzes the coordinated movement of the two tRNA molecules, the mRNA and conformational changes in the ribosome. The sequence is that of Elongation factor G from Sulfurimonas denitrificans (strain ATCC 33889 / DSM 1251) (Thiomicrospira denitrificans (strain ATCC 33889 / DSM 1251)).